The sequence spans 274 residues: MPLLKAKPTSAGRRHVVQVVNPDLHKGAPYAPLLEKNSKSGGRNNNGRITVRHVGGGHKQHYRVIDFKRNKDGIPAKIERLEYDPNRSANICLVLYADGERRYILAPKGAKAGDQIQSGSDAAIKAGNSLPMRNIPVGTTVHAIEMKPGKGAQIARSAGQYAQILARAEGYVTLRLRSGEVRRVLADCRATIGEIGNAEHMLRSLGKAGANRWRGIRPTVRGVAMNPVDHPHGGGEGRTSGGRHPVSPWGVPTKGKKTRSNKRTDKLIVRRRNK.

Disordered stretches follow at residues 28–53 and 223–274; these read APYAPLLEKNSKSGGRNNNGRITVRH and VAMN…RRNK. Positions 39–48 are enriched in low complexity; it reads KSGGRNNNGR.

It belongs to the universal ribosomal protein uL2 family. In terms of assembly, part of the 50S ribosomal subunit. Forms a bridge to the 30S subunit in the 70S ribosome.

Its function is as follows. One of the primary rRNA binding proteins. Required for association of the 30S and 50S subunits to form the 70S ribosome, for tRNA binding and peptide bond formation. It has been suggested to have peptidyltransferase activity; this is somewhat controversial. Makes several contacts with the 16S rRNA in the 70S ribosome. The sequence is that of Large ribosomal subunit protein uL2 from Pseudoalteromonas atlantica (strain T6c / ATCC BAA-1087).